Here is a 461-residue protein sequence, read N- to C-terminus: V-type ATP synthase beta chain (461 aa).

Belongs to the ATPase alpha/beta chains family.

Functionally, produces ATP from ADP in the presence of a proton gradient across the membrane. The V-type beta chain is a regulatory subunit. The chain is V-type ATP synthase beta chain from Clostridium botulinum (strain Langeland / NCTC 10281 / Type F).